The chain runs to 375 residues: Monocyte differentiation antigen CD14 (375 aa).

The first 19 residues, 1–19 (MERASCLLLLLLPLVHVSA), serve as a signal peptide directing secretion. 2 disulfides stabilise this stretch: C25-C36 and C34-C51. The N-linked (GlcNAc...) asparagine glycan is linked to N37. 11 LRR repeats span residues 54–82 (AVEV…PRQY), 83–118 (ADTV…YSRL), 119–144 (KELT…GLAL), 145–172 (SSLR…KPGL), 173–196 (KVLS…FPAL), 197–224 (TSLD…FPAI), 225–251 (QNLA…GVQP), 252–278 (HSLD…SSAL), 279–299 (NSLN…PAKL), 300–321 (RVLD…LPEV), and 322–349 (DNLT…SGVV). The N-linked (GlcNAc...) asparagine glycan is linked to N151. 2 disulfide bridges follow: C187/C217 and C241/C272. An N-linked (GlcNAc...) asparagine glycan is attached at N282. The segment at 290–375 (QVPKGLPAKL…VLLQGARGFA (86 aa)) is required for response to bacterial lipopolysaccharide (LPS). N323 is a glycosylation site (N-linked (GlcNAc...) asparagine). Residue T336 is glycosylated (O-linked (GalNAc...) threonine). A lipid anchor (GPI-anchor amidated asparagine) is attached at N345. Residues 346–375 (SGVVPACARSTLSVGVSGTLVLLQGARGFA) constitute a propeptide, removed in mature form.

As to quaternary structure, interacts with LPS-bound LPB. Belongs to the lipopolysaccharide (LPS) receptor, a multi-protein complex containing at least CD14, LY96 and TLR4. Interacts with LPAR1. Interacts with the TLR2:TLR6 or TLR2:TLR1 heterodimers; upon interaction with ligands such as diacylated lipopeptides and triacylated lipopeptides, respectively. Interacts with MYO18A. Interacts with FSTL1. In terms of processing, N- and O- glycosylated. O-glycosylated with a core 1 or possibly core 8 glycan. In terms of tissue distribution, detected on macrophages (at protein level). Expressed strongly on the surface of monocytes and weakly on the surface of granulocytes; also expressed by most tissue macrophages.

Its subcellular location is the cell membrane. It localises to the secreted. The protein resides in the membrane raft. The protein localises to the golgi apparatus. Functionally, coreceptor for bacterial lipopolysaccharide. In concert with LBP, binds to monomeric lipopolysaccharide and delivers it to the LY96/TLR4 complex, thereby mediating the innate immune response to bacterial lipopolysaccharide (LPS). Acts via MyD88, TIRAP and TRAF6, leading to NF-kappa-B activation, cytokine secretion and the inflammatory response. Acts as a coreceptor for TLR2:TLR6 heterodimer in response to diacylated lipopeptides and for TLR2:TLR1 heterodimer in response to triacylated lipopeptides, these clusters trigger signaling from the cell surface and subsequently are targeted to the Golgi in a lipid-raft dependent pathway. Binds electronegative LDL (LDL(-)) and mediates the cytokine release induced by LDL(-). The chain is Monocyte differentiation antigen CD14 (CD14) from Homo sapiens (Human).